We begin with the raw amino-acid sequence, 76 residues long: Acyl carrier protein (76 aa).

The region spanning 2 to 76 (SNIEERVIKV…QSAIDFVKSR (75 aa)) is the Carrier domain. Position 37 is an O-(pantetheine 4'-phosphoryl)serine (Ser-37).

The protein belongs to the acyl carrier protein (ACP) family. In terms of processing, 4'-phosphopantetheine is transferred from CoA to a specific serine of apo-ACP by AcpS. This modification is essential for activity because fatty acids are bound in thioester linkage to the sulfhydryl of the prosthetic group.

It localises to the cytoplasm. The protein operates within lipid metabolism; fatty acid biosynthesis. Carrier of the growing fatty acid chain in fatty acid biosynthesis. The polypeptide is Acyl carrier protein (Dichelobacter nodosus (strain VCS1703A)).